A 239-amino-acid chain; its full sequence is Ribonuclease PH (239 aa).

Residues arginine 87 and 125–127 contribute to the phosphate site; that span reads GTR.

The protein belongs to the RNase PH family. Homohexameric ring arranged as a trimer of dimers.

It catalyses the reaction tRNA(n+1) + phosphate = tRNA(n) + a ribonucleoside 5'-diphosphate. Phosphorolytic 3'-5' exoribonuclease that plays an important role in tRNA 3'-end maturation. Removes nucleotide residues following the 3'-CCA terminus of tRNAs; can also add nucleotides to the ends of RNA molecules by using nucleoside diphosphates as substrates, but this may not be physiologically important. Probably plays a role in initiation of 16S rRNA degradation (leading to ribosome degradation) during starvation. In Ectopseudomonas mendocina (strain ymp) (Pseudomonas mendocina), this protein is Ribonuclease PH.